Reading from the N-terminus, the 130-residue chain is Small ribosomal subunit protein uS8 (130 aa).

This sequence belongs to the universal ribosomal protein uS8 family. Part of the 30S ribosomal subunit. Contacts proteins S5 and S12.

One of the primary rRNA binding proteins, it binds directly to 16S rRNA central domain where it helps coordinate assembly of the platform of the 30S subunit. This Pseudomonas syringae pv. tomato (strain ATCC BAA-871 / DC3000) protein is Small ribosomal subunit protein uS8.